Here is a 259-residue protein sequence, read N- to C-terminus: Flap endonuclease Xni (259 aa).

Asp109 is a Mg(2+) binding site. The 5'-3' exonuclease domain maps to 165–255 (VTPAQLTDYW…FNLQDIRFNS (91 aa)). Residues Leu176, Pro185, Val187, and Ile190 each coordinate K(+). The tract at residues 189–194 (GIGPKA) is interaction with DNA.

Belongs to the Xni family. Requires Mg(2+) as cofactor. K(+) is required as a cofactor.

In terms of biological role, has flap endonuclease activity. During DNA replication, flap endonucleases cleave the 5'-overhanging flap structure that is generated by displacement synthesis when DNA polymerase encounters the 5'-end of a downstream Okazaki fragment. The chain is Flap endonuclease Xni from Vibrio cholerae serotype O1 (strain ATCC 39315 / El Tor Inaba N16961).